Consider the following 461-residue polypeptide: tRNA modification GTPase MnmE (461 aa).

Residues arginine 23, glutamate 84, and arginine 123 each coordinate (6S)-5-formyl-5,6,7,8-tetrahydrofolate. The TrmE-type G domain maps to 216–383 (GARAALIGRP…LGATVARLLL (168 aa)). Asparagine 226 contacts K(+). Residues 226–231 (NAGKSS), 245–251 (TPIPGTT), and 270–273 (DTAG) each bind GTP. Residue serine 230 participates in Mg(2+) binding. 3 residues coordinate K(+): threonine 245, isoleucine 247, and threonine 250. Position 251 (threonine 251) interacts with Mg(2+). (6S)-5-formyl-5,6,7,8-tetrahydrofolate is bound at residue lysine 461.

This sequence belongs to the TRAFAC class TrmE-Era-EngA-EngB-Septin-like GTPase superfamily. TrmE GTPase family. As to quaternary structure, homodimer. Heterotetramer of two MnmE and two MnmG subunits. The cofactor is K(+).

It is found in the cytoplasm. Functionally, exhibits a very high intrinsic GTPase hydrolysis rate. Involved in the addition of a carboxymethylaminomethyl (cmnm) group at the wobble position (U34) of certain tRNAs, forming tRNA-cmnm(5)s(2)U34. The protein is tRNA modification GTPase MnmE of Roseiflexus sp. (strain RS-1).